A 1254-amino-acid chain; its full sequence is MFPFQPMYPMQPMPYRNPFAAPRRPWFPRTDPFLAMQVQELTRSMANLTFKQRRDAPPEGPSAKKPKKEASQKQKGGGQGKKKKNQGKKKAKTGPPNPKAQNGNKKKTNKKPGKRQRMVMKLESDKTFPIMLEGKINGYACVVGGKLFRPMHVEGKIDNDVLAALKTKKASKYDLEYADVPQNMRADTFKYTHEKPQGYYSWHHGAVQYENGRFTVPKGVGAKGDSGRPILDNQGRVVAIVLGGVNEGSRTALSVVMWNEKGVTVKYTPENCEQWSLVTTMCLLANVTFPCAQPPICYDRKPAETLAMLSVNVDNPGYDELLEAAVKCPGRKRRSTEELFNEYKLTRPYMARCIRCAVGSCHSPIAIEAVKSDGHDGYVRLQTSSQYGLDSSGNLKGRTMRYDMHGTIKEIPLHQVSLYTSRPCHIVDGHGYFLLARCPAGDSITMEFKKDSVRHSCSVPYEVKFNPVGRELYTHPPEHGVEQACQVYAHDAQNRGAYVEMHLPGSEVDSSLVSLSGSSVTVTPPDGTSALVECECGGTKISETINKTKQFSQCTKKEQCRAYRLQNDKWVYNSDKLPKAAGATLKGKLHVPFLLADGKCTVPLAPEPMITFGFRSVSLKLHPKNPTYLITRQLADEPHYTHELISEPAVRNFTVTEKGWEFVWGNHPPKRFWAQETAPGNPHGLPHEVITHYYHRYPMSTILGLSICAAIATVSVAASTWLFCRSRVACLTPYRLTPNARIPFCLAVLCCARTARAETTWESLDHLWNNNQQMFWIQLLIPLAALIVVTRLLRCVCCVVPFLVMAGAAAPAYEHATTMPSQAGISYNTIVNRAGYAPLPISITPTKIKLIPTVNLEYVTCHYKTGMDSPAIKCCGSQECTPTYRPDEQCKVFTGVYPFMWGGAYCFCDTENTQVSKAYVMKSDDCLADHAEAYKAHTASVQAFLNITVGEHSIVTTVYVNGETPVNFNGVKITAGPLSTAWTPFDRKIVQYAGEIYNYDFPEYGAGQPGAFGDIQSRTVSSSDLYANTNLVLQRPKAGAIHVPYTQAPSGFEQWKKDKAPSLKFTAPFGCEIYTNPIRAENCAVGSIPLAFDIPDALFTRVSETPTLSAAECTLNECVYSSDFGGIATVKYSASKSGKCAVHVPSGTATLKEAAVELTEQGSATIHFSTANIHPEFRLQICTSYVTCKGDCHPPKDHIVTHPQYHAQTFTAAVSKTAWTWLTSLLGGSAVIIIIGLVLATIVAMYVLTNQKHN.

Positions 1 to 33 are necessary for nucleocapsid assembly and virus assembly; it reads MFPFQPMYPMQPMPYRNPFAAPRRPWFPRTDPF. Residues 33 to 68 form a host transcription inhibition region; sequence FLAMQVQELTRSMANLTFKQRRDAPPEGPSAKKPKK. Positions 41–48 match the Supraphysiological nuclear export signal motif; the sequence is LTRSMANL. The disordered stretch occupies residues 45–119; that stretch reads MANLTFKQRR…KKPGKRQRMV (75 aa). The short motif at 64–68 is the Nuclear localization signal element; the sequence is KKPKK. Residues 80-92 show a composition bias toward basic residues; sequence GKKKKNQGKKKAK. A binding to the viral RNA region spans residues 91 to 127; the sequence is AKTGPPNPKAQNGNKKKTNKKPGKRQRMVMKLESDKT. Threonine 93 and threonine 108 each carry phosphothreonine. Residues 104–118 are compositionally biased toward basic residues; that stretch reads NKKKTNKKPGKRQRM. Residues 112-126 form a ribosome-binding region; it reads PGKRQRMVMKLESDK. Residue serine 124 is modified to Phosphoserine. Residues 126 to 275 enclose the Peptidase S3 domain; that stretch reads KTFPIMLEGK…KYTPENCEQW (150 aa). A Phosphothreonine modification is found at threonine 127. Active-site charge relay system residues include histidine 152, aspartate 174, and serine 226. A functions as an uncleaved signal peptide for the precursor of protein E3/E2 region spans residues 276–287; that stretch reads SLVTTMCLLANV. The Extracellular segment spans residues 276 to 701; sequence SLVTTMCLLA…HYYHRYPMST (426 aa). N-linked (GlcNAc...) asparagine; by host glycosylation is found at asparagine 286, asparagine 546, and asparagine 652. Residues 702-722 traverse the membrane as a helical segment; it reads ILGLSICAAIATVSVAASTWL. At 723-757 the chain is on the cytoplasmic side; it reads FCRSRVACLTPYRLTPNARIPFCLAVLCCARTARA. 3 S-palmitoyl cysteine; by host lipidation sites follow: cysteine 730, cysteine 750, and cysteine 751. The Extracellular segment spans residues 758 to 772; sequence ETTWESLDHLWNNNQ. Residues 773–793 traverse the membrane as a helical segment; sequence QMFWIQLLIPLAALIVVTRLL. Residues 794–795 are Cytoplasmic-facing; that stretch reads RC. The chain crosses the membrane as a helical span at residues 796 to 816; that stretch reads VCCVVPFLVMAGAAAPAYEHA. At 817-1224 the chain is on the extracellular side; it reads TTMPSQAGIS…SKTAWTWLTS (408 aa). Cystine bridges form between cysteine 861–cysteine 926, cysteine 874–cysteine 906, cysteine 875–cysteine 908, and cysteine 880–cysteine 890. Residues 896–913 form an E1 fusion peptide loop region; that stretch reads VYPFMWGGAYCFCDTENT. Asparagine 946 carries N-linked (GlcNAc...) asparagine; by host glycosylation. Cystine bridges form between cysteine 1071–cysteine 1083, cysteine 1113–cysteine 1188, cysteine 1118–cysteine 1192, and cysteine 1140–cysteine 1182. Residues 1225 to 1245 traverse the membrane as a helical segment; it reads LLGGSAVIIIIGLVLATIVAM. Residues 1246 to 1254 lie on the Cytoplasmic side of the membrane; it reads YVLTNQKHN.

In terms of assembly, homodimer. Homomultimer. Interacts with host karyopherin KPNA4; this interaction allows the nuclear import of the viral capsid protein. Interacts with spike glycoprotein E2. Interacts with host IRAK1; the interaction leads to inhibition of IRAK1-dependent signaling. Part of a tetrameric complex composed of host CRM1, host importin alpha/beta dimer and the viral capsid; this complex blocks the receptor-mediated transport through the nuclear pore. Interacts with host phosphatase PPP1CA; this interaction dephosphorylates the capsid protein, which increases its ability to bind to the viral genome. The precursor of protein E3/E2 and E1 form a heterodimer shortly after synthesis. As to quaternary structure, interacts with spike glycoprotein E2. The precursor of protein E3/E2 and E1 form a heterodimer shortly after synthesis. Processing of the precursor of protein E3/E2 into E2 and E3 results in a heterodimer of the spike glycoproteins E2 and E1. Spike at virion surface are constituted of three E2-E1 heterodimers. After target cell attachment and endocytosis, E1 change conformation to form homotrimers. Interacts with 6K protein. Interacts (via fusion peptide loop) with host LDLRAD3 (via domain LDL-receptor class A 1); this interaction mediates viral entry to the host cell. 2 adjacent E2-E1 heterodimers in the trimeric spike interact with host LDLRAD3. In terms of assembly, interacts with spike glycoprotein E1. Processing of the precursor of protein E3/E2 into E2 and E3 results in a heterodimer of the spike glycoproteins E2 and E1. Spike at virion surface are constituted of a trimer of E2-E1 heterodimers. Interacts with 6K protein. Interacts with host LDLRAD3 (via domain LDL-receptor class A 1); this interaction mediates viral entry to the host cell. 2 adjacent E2-E1 heterodimers in the trimeric spike interact with host LDLRAD3. Oligomer. Interacts with spike glycoprotein E1. Interacts with spike glycoprotein E2. In terms of processing, structural polyprotein: Specific enzymatic cleavages in vivo yield mature proteins. Capsid protein is auto-cleaved during polyprotein translation, unmasking a signal peptide at the N-terminus of the precursor of E3/E2. The remaining polyprotein is then targeted to the host endoplasmic reticulum, where host signal peptidase cleaves it into pE2, 6K and E1 proteins. pE2 is further processed to mature E3 and E2 by host furin in trans-Golgi vesicle. Post-translationally, phosphorylated on serine and threonine residues. Palmitoylated via thioester bonds. These palmitoylations may induce disruption of the C-terminus transmembrane. This would result in the reorientation of E2 C-terminus from lumenal to cytoplasmic side. In terms of processing, N-glycosylated. Post-translationally, palmitoylated via thioester bonds.

It is found in the virion. The protein resides in the host cytoplasm. Its subcellular location is the host cell membrane. The protein localises to the host nucleus. It localises to the virion membrane. It carries out the reaction Autocatalytic release of the core protein from the N-terminus of the togavirus structural polyprotein by hydrolysis of a -Trp-|-Ser- bond.. Forms an icosahedral capsid with a T=4 symmetry composed of 240 copies of the capsid protein surrounded by a lipid membrane through which penetrate 80 spikes composed of trimers of E1-E2 heterodimers. The capsid protein binds to the viral RNA genome at a site adjacent to a ribosome binding site for viral genome translation following genome release. Possesses a protease activity that results in its autocatalytic cleavage from the nascent structural protein. Following its self-cleavage, the capsid protein transiently associates with ribosomes, and within several minutes the protein binds to viral RNA and rapidly assembles into icosahedric core particles. The resulting nucleocapsid eventually associates with the cytoplasmic domain of the spike glycoprotein E2 at the cell membrane, leading to budding and formation of mature virions. In case of infection, new virions attach to target cells and after clathrin-mediated endocytosis their membrane fuses with the host endosomal membrane. This leads to the release of the nucleocapsid into the cytoplasm, followed by an uncoating event necessary for the genomic RNA to become accessible. The uncoating might be triggered by the interaction of capsid proteins with ribosomes. Binding of ribosomes would release the genomic RNA since the same region is genomic RNA-binding and ribosome-binding. Specifically inhibits interleukin-1 receptor-associated kinase 1/IRAK1-dependent signaling during viral entry, representing a means by which the alphaviruses may evade innate immune detection and activation prior to viral gene expression. Inhibits host transcription. Forms a tetrameric complex with XPO1/CRM1 and the nuclear import receptor importin. This complex blocks the central channel of host nuclear pores thereby inhibiting the receptor-mediated nuclear transport and thus the host mRNA and rRNA transcription. The inhibition of transcription is linked to a cytopathic effect on the host cell. Functionally, provides the signal sequence for the translocation of the precursor of protein E3/E2 to the host endoplasmic reticulum. Furin-cleaved E3 remains associated with spike glycoprotein E1 and mediates pH protection of the latter during the transport via the secretory pathway. After virion release from the host cell, the assembly protein E3 is gradually released in the extracellular space. In terms of biological role, plays a role in viral attachment to target host cell, by binding to the cell receptor LDLRAD3. Synthesized as a p62 precursor which is processed by furin at the cell membrane just before virion budding, giving rise to E2-E1 heterodimer. The p62-E1 heterodimer is stable, whereas E2-E1 is unstable and dissociate at low pH. p62 is processed at the last step, presumably to avoid E1 fusion activation before its final export to cell surface. E2 C-terminus contains a transitory transmembrane that would be disrupted by palmitoylation, resulting in reorientation of the C-terminal tail from lumenal to cytoplasmic side. This step is critical since E2 C-terminus is involved in budding by interacting with capsid proteins. This release of E2 C-terminus in cytoplasm occurs lately in protein export, and precludes premature assembly of particles at the endoplasmic reticulum membrane. Its function is as follows. Acts as a viroporin that participates in virus glycoprotein processing and transport to the plasma membrane, cell permeabilization and budding of viral particles. Disrupts the calcium homeostasis of the cell, probably at the endoplasmic reticulum level. This leads to cytoplasmic calcium elevation. Because of its lipophilic properties, the 6K protein is postulated to influence the selection of lipids that interact with the transmembrane domains of the glycoproteins, which, in turn, affects the deformability of the bilayer required for the extreme curvature that occurs as budding proceeds. Present in low amount in virions, about 3% compared to viral glycoproteins. Class II viral fusion protein. Fusion activity is inactive as long as E1 is bound to E2 in mature virion. After virus attachment to cell receptor LDLRAD3 and endocytosis, acidification of the endosome induce dissociation of E1/E2 heterodimer and concomitant trimerization of the E1 subunits. This E1 trimer is fusion active, and promotes release of viral nucleocapsid in cytoplasm after endosome and viral membrane fusion. Efficient fusion requires the presence of cholesterol and sphingolipid in the target membrane. This is Structural polyprotein from Bos taurus (Bovine).